The primary structure comprises 191 residues: Putative glutathione-dependent formaldehyde-activating enzyme (191 aa).

The CENP-V/GFA domain occupies phenylalanine 20 to aspartate 166. Positions 27, 29, 48, 50, 53, 95, and 98 each coordinate Zn(2+).

It belongs to the Gfa family. The cofactor is Zn(2+).

The catalysed reaction is S-(hydroxymethyl)glutathione = glutathione + formaldehyde. It functions in the pathway one-carbon metabolism; formaldehyde degradation; formate from formaldehyde (glutathione route): step 1/3. Catalyzes the condensation of formaldehyde and glutathione to S-hydroxymethylglutathione. The sequence is that of Putative glutathione-dependent formaldehyde-activating enzyme from Colletotrichum graminicola (strain M1.001 / M2 / FGSC 10212) (Maize anthracnose fungus).